The following is a 355-amino-acid chain: MAEFVRAQIFGTTFEITSRYTDLQPVGMGAFGLVCSAKDQLTNQAVAVKKIMKPFSTPVLSKRTYRELKLLKHLRHENIISLSDIFISPLEDIYFVTELLGTDLHRLLTSRPLEKQFIQYFLYQILRGLKYVHSAGVVHRDLKPSNILVNENCDLKICDFGLARIQDPQMTGYVSTRYYRAPEIMLTWQKYDVEVDIWSAGCIFAEMLEGKPLFPGKDHVNQFSIITELLGTPPDDVIQTICSENTLRFVQSLPKRERQPLANKFKNAEPDAVDLLENMLVFDPRKRVRAEQALAHPYLAPYHDPTDEPVADEKFDWSFNDADLPVDTWKIMMYSEILDYHNVDAAVPEQENNGS.

One can recognise a Protein kinase domain in the interval 20 to 299; the sequence is YTDLQPVGMG…AEQALAHPYL (280 aa). ATP is bound by residues 26–34 and Lys49; that span reads VGMGAFGLV. The active-site Proton acceptor is the Asp141. At Thr171 the chain carries Phosphothreonine. The TXY motif lies at 171–173; sequence TGY. Tyr173 carries the phosphotyrosine modification.

Belongs to the protein kinase superfamily. Ser/Thr protein kinase family. MAP kinase subfamily. HOG1 sub-subfamily. Mg(2+) serves as cofactor. Dually phosphorylated on Thr-171 and Tyr-173, which activates the enzyme. Phosphorylation is induced by osmotic stress and the presence of the antifungal agent iprodione.

It localises to the cytoplasm. Its subcellular location is the nucleus. The catalysed reaction is L-seryl-[protein] + ATP = O-phospho-L-seryl-[protein] + ADP + H(+). It catalyses the reaction L-threonyl-[protein] + ATP = O-phospho-L-threonyl-[protein] + ADP + H(+). Activated by tyrosine and threonine phosphorylation. Functionally, proline-directed serine/threonine-protein kinase involved in a signal transduction pathway that is activated by changes in the osmolarity of the extracellular environment. Controls osmotic regulation of transcription of target genes. The polypeptide is Mitogen-activated protein kinase HOG1 (HOG1) (Cochliobolus heterostrophus (Southern corn leaf blight fungus)).